Consider the following 253-residue polypeptide: Ubiquinone/menaquinone biosynthesis C-methyltransferase UbiE (253 aa).

S-adenosyl-L-methionine-binding positions include Thr-76, Asp-97, and 125-126; that span reads NA.

This sequence belongs to the class I-like SAM-binding methyltransferase superfamily. MenG/UbiE family.

It catalyses the reaction a 2-demethylmenaquinol + S-adenosyl-L-methionine = a menaquinol + S-adenosyl-L-homocysteine + H(+). The enzyme catalyses a 2-methoxy-6-(all-trans-polyprenyl)benzene-1,4-diol + S-adenosyl-L-methionine = a 5-methoxy-2-methyl-3-(all-trans-polyprenyl)benzene-1,4-diol + S-adenosyl-L-homocysteine + H(+). The protein operates within quinol/quinone metabolism; menaquinone biosynthesis; menaquinol from 1,4-dihydroxy-2-naphthoate: step 2/2. It functions in the pathway cofactor biosynthesis; ubiquinone biosynthesis. In terms of biological role, methyltransferase required for the conversion of demethylmenaquinol (DMKH2) to menaquinol (MKH2) and the conversion of 2-polyprenyl-6-methoxy-1,4-benzoquinol (DDMQH2) to 2-polyprenyl-3-methyl-6-methoxy-1,4-benzoquinol (DMQH2). This Bradyrhizobium diazoefficiens (strain JCM 10833 / BCRC 13528 / IAM 13628 / NBRC 14792 / USDA 110) protein is Ubiquinone/menaquinone biosynthesis C-methyltransferase UbiE.